Here is a 341-residue protein sequence, read N- to C-terminus: MATDRSVRIGLIGAGAIGEDHARRLSTVIRGADVVAVHDVDPSRAKTVATRFRDARVIPDGNSLIGDPDVDAVVVASAAPTHEAYVLAAIAARKPVFCEKPLATTAAGCLRIVEAEKAHGRRFVRVGFMRRFDPAYLGLKAELRSGAIGHPLLAHLAHRNPAVPSTLRTTDAIADSLVHEMDLVRWLFDTEIREVRAVAGRRNAKAGPDLHDPLLVLVRMATDVVVDVELSLNIGYGYHIRAEIVGENGTVALASEQPIVRRISGEERRPVAQHWKTRFAAAYDAELSEWVRDVSQGRVSGPSAWDGYAATLATDAAAESLRSDTAVAAFPGDVPTLYREP.

The protein belongs to the Gfo/Idh/MocA family. As to quaternary structure, homotetramer.

It carries out the reaction myo-inositol + NAD(+) = scyllo-inosose + NADH + H(+). Functionally, involved in the oxidation of myo-inositol (MI) to 2-keto-myo-inositol (2KMI or 2-inosose). The chain is Inositol 2-dehydrogenase from Acidothermus cellulolyticus (strain ATCC 43068 / DSM 8971 / 11B).